The chain runs to 1434 residues: Probable ATP-dependent DNA helicase HFM1 (1434 aa).

In terms of domain architecture, Helicase ATP-binding spans 289–476 (DDLLYTDRNF…WLSDGERPAV (188 aa)). 302–309 (APTGSGKT) contributes to the ATP binding site. Residues 410 to 413 (DEVH) carry the DEAH box motif. One can recognise a Helicase C-terminal domain in the interval 514–718 (KVYSVIRTYS…DVNIALDWIR (205 aa)). The SEC63 domain maps to 775-1089 (PTEAGRLMAW…VGLDIHQKFT (315 aa)). Residues 1110–1130 (TDISHSDYSGRATATGSSKGM) form a disordered region. A C4-type zinc finger spans residues 1141-1156 (CHHHCKNKHACGHDCC). The disordered stretch occupies residues 1294–1333 (GFGDTRDSSLGGSKLPFQKSSSRFQRDNSNSFASSPGKPD). Residues 1311 to 1327 (QKSSSRFQRDNSNSFAS) show a composition bias toward polar residues.

This sequence belongs to the helicase family. SKI2 subfamily. The cofactor is Zn(2+).

The enzyme catalyses Couples ATP hydrolysis with the unwinding of duplex DNA by translocating in the 3'-5' direction.. It carries out the reaction ATP + H2O = ADP + phosphate + H(+). Functionally, required for crossover formation and complete synapsis of homologous chromosomes during meiosis. This Mus musculus (Mouse) protein is Probable ATP-dependent DNA helicase HFM1.